The chain runs to 102 residues: Co-chaperonin GroES (102 aa).

It belongs to the GroES chaperonin family. Heptamer of 7 subunits arranged in a ring. Interacts with the chaperonin GroEL.

Its subcellular location is the cytoplasm. Functionally, together with the chaperonin GroEL, plays an essential role in assisting protein folding. The GroEL-GroES system forms a nano-cage that allows encapsulation of the non-native substrate proteins and provides a physical environment optimized to promote and accelerate protein folding. GroES binds to the apical surface of the GroEL ring, thereby capping the opening of the GroEL channel. The protein is Co-chaperonin GroES of Anabaena sp. (strain L31).